Here is a 236-residue protein sequence, read N- to C-terminus: Small ribosomal subunit protein uS2c (236 aa).

This sequence belongs to the universal ribosomal protein uS2 family.

Its subcellular location is the plastid. The protein localises to the chloroplast. The polypeptide is Small ribosomal subunit protein uS2c (rps2) (Physcomitrium patens (Spreading-leaved earth moss)).